Here is a 490-residue protein sequence, read N- to C-terminus: Cell division cycle protein cdt2 (490 aa).

A disordered region spans residues Ile-18–Lys-40. WD repeat units follow at residues Ala-178–Asp-208, Tyr-226–Asp-257, Gly-285–Asp-317, Lys-339–Ser-369, Arg-387–Val-419, and Gly-435–Asn-464.

Belongs to the WD repeat cdt2 family. As to quaternary structure, component of the DCX(DTL) E3 ubiquitin ligase complex, at least composed of cul4, ddb1, cdt2 and pip1.

The protein localises to the nucleus. It functions in the pathway protein modification; protein ubiquitination. In terms of biological role, substrate-specific adapter of a DCX (DDB1-CUL4-X-box) E3 ubiquitin-protein ligase complex required for DNA replication during mitosis and meiosis. The DCX(DTL) complex, also named CRL4(CDT2) complex, mediates the polyubiquitination and subsequent degradation of cdt1 and spd1. Involved in the regulation of mitotic and pre-meiotic S-phase progression. The protein is Cell division cycle protein cdt2 (cdt2) of Schizosaccharomyces pombe (strain 972 / ATCC 24843) (Fission yeast).